A 47-amino-acid chain; its full sequence is Glyceraldehyde-3-phosphate dehydrogenase, cytosolic (47 aa).

Belongs to the glyceraldehyde-3-phosphate dehydrogenase family. As to quaternary structure, homotetramer.

It localises to the cytoplasm. It catalyses the reaction D-glyceraldehyde 3-phosphate + phosphate + NAD(+) = (2R)-3-phospho-glyceroyl phosphate + NADH + H(+). It participates in carbohydrate degradation; glycolysis; pyruvate from D-glyceraldehyde 3-phosphate: step 1/5. This chain is Glyceraldehyde-3-phosphate dehydrogenase, cytosolic, found in Pseudotsuga menziesii (Douglas-fir).